A 272-amino-acid chain; its full sequence is Glutamate racemase (272 aa).

Substrate is bound by residues 13–14 (DS) and 45–46 (YG). The active-site Proton donor/acceptor is cysteine 76. 77–78 (NT) serves as a coordination point for substrate. Cysteine 186 (proton donor/acceptor) is an active-site residue. A substrate-binding site is contributed by 187 to 188 (TH).

Belongs to the aspartate/glutamate racemases family.

The enzyme catalyses L-glutamate = D-glutamate. Its pathway is cell wall biogenesis; peptidoglycan biosynthesis. Provides the (R)-glutamate required for cell wall biosynthesis. The sequence is that of Glutamate racemase from Cupriavidus pinatubonensis (strain JMP 134 / LMG 1197) (Cupriavidus necator (strain JMP 134)).